We begin with the raw amino-acid sequence, 95 residues long: Large ribosomal subunit protein uL23 (95 aa).

It belongs to the universal ribosomal protein uL23 family. As to quaternary structure, part of the 50S ribosomal subunit. Contacts protein L29, and trigger factor when it is bound to the ribosome.

Its function is as follows. One of the early assembly proteins it binds 23S rRNA. One of the proteins that surrounds the polypeptide exit tunnel on the outside of the ribosome. Forms the main docking site for trigger factor binding to the ribosome. The polypeptide is Large ribosomal subunit protein uL23 (Coxiella burnetii (strain RSA 493 / Nine Mile phase I)).